Here is a 128-residue protein sequence, read N- to C-terminus: Small ribosomal subunit protein eS8 (128 aa).

It belongs to the eukaryotic ribosomal protein eS8 family. In terms of assembly, part of the 30S ribosomal subunit.

In Methanococcus maripaludis (strain C5 / ATCC BAA-1333), this protein is Small ribosomal subunit protein eS8.